We begin with the raw amino-acid sequence, 460 residues long: MSGRLPFEEQLLSGQLRPSAEEREYIAGVARRLLDAINASGKATGMVVGSIARNTWVKGDRDLDVFLLFSPEMPREALETEGLALARSIARAFTPMFHEKYAEHPYINANVEGIDVDLVPCYNVASAEHIQSAVDRTPFHTRYITDKINGLTDDVLLLKQFAKAGGIYGSDQMTEGFSGYLCELLVLHYGGFAPLLAAAAEWRPPVIIDIGKHAAKKFDEPLVVIDPVDPRRNVAAAVSLDRMAEFVELARGYRDAPSEEFFRIRKEYPCCPADLAALLASRGTSLYAVTFATPPFIEEIVVPQLKRSTGAISDLLDRSGFAVHHAHYRMGPGRCMLLFELIIDELPPIRRHEGPPVWNRVNAEKFREKYRTSPLPGPFIENGRYVTEVPREFTRAGDLISSPAILSVGTGRHVRESLGKDWCVLEGADCWQEEFSGFIATFFSRRSPLVRIERDRPGRE.

Residues Ser50 and Arg53 each contribute to the ATP site. CTP contacts are provided by Ser50 and Arg53. Residues Asp62, Asp64, and Asp117 each coordinate Mg(2+). Residues His140, Lys159, and Tyr168 each coordinate ATP. Positions 140, 159, and 168 each coordinate CTP.

It belongs to the tRNA nucleotidyltransferase/poly(A) polymerase family. Archaeal CCA-adding enzyme subfamily. In terms of assembly, homodimer. Mg(2+) is required as a cofactor.

The catalysed reaction is a tRNA precursor + 2 CTP + ATP = a tRNA with a 3' CCA end + 3 diphosphate. The enzyme catalyses a tRNA with a 3' CCA end + 2 CTP + ATP = a tRNA with a 3' CCACCA end + 3 diphosphate. Its function is as follows. Catalyzes the addition and repair of the essential 3'-terminal CCA sequence in tRNAs without using a nucleic acid template. Adds these three nucleotides in the order of C, C, and A to the tRNA nucleotide-73, using CTP and ATP as substrates and producing inorganic pyrophosphate. tRNA 3'-terminal CCA addition is required both for tRNA processing and repair. Also involved in tRNA surveillance by mediating tandem CCA addition to generate a CCACCA at the 3' terminus of unstable tRNAs. While stable tRNAs receive only 3'-terminal CCA, unstable tRNAs are marked with CCACCA and rapidly degraded. This is CCA-adding enzyme from Methanoregula boonei (strain DSM 21154 / JCM 14090 / 6A8).